Consider the following 514-residue polypeptide: 6-phosphofructo-2-kinase/fructose-2,6-bisphosphatase 3 (514 aa).

The 6-phosphofructo-2-kinase stretch occupies residues M1 to Q245. G42–Y50 contributes to the ATP binding site. The beta-D-fructose 6-phosphate site is built by R75 and R99. D125 is a catalytic residue. Residues T127 and R133 each coordinate beta-D-fructose 6-phosphate. C155 is an active-site residue. N164–K169 contributes to the ATP binding site. Beta-D-fructose 6-phosphate is bound by residues K169, R190, and Y194. The interval P246 to T514 is fructose-2,6-bisphosphatase. R253 contacts beta-D-fructose 2,6-bisphosphate. Catalysis depends on H254, which acts as the Tele-phosphohistidine intermediate. Residues N260 and G266 each contribute to the beta-D-fructose 2,6-bisphosphate site. E323 acts as the Proton donor/acceptor in catalysis. Residues Y334, R348, K352, Y363, Q389, and R393 each contribute to the beta-D-fructose 2,6-bisphosphate site. Residue Y345–R348 participates in ATP binding. ATP is bound by residues Q389 to R393 and Y425. Residues E444 to R475 are disordered. S461 carries the post-translational modification Phosphoserine; by AMPK and PKA. Residue T463 is modified to Phosphothreonine. Residue S467 is modified to Phosphoserine. T471 carries the post-translational modification Phosphothreonine; by PKC.

The protein in the C-terminal section; belongs to the phosphoglycerate mutase family. In terms of assembly, homodimer. Forms a heterodimer with PFKFB2. In terms of processing, phosphorylation by AMPK stimulates activity.

The enzyme catalyses beta-D-fructose 2,6-bisphosphate + H2O = beta-D-fructose 6-phosphate + phosphate. It carries out the reaction beta-D-fructose 6-phosphate + ATP = beta-D-fructose 2,6-bisphosphate + ADP + H(+). Catalyzes both the synthesis and degradation of fructose 2,6-bisphosphate. This is 6-phosphofructo-2-kinase/fructose-2,6-bisphosphatase 3 (PFKFB3) from Pongo abelii (Sumatran orangutan).